A 455-amino-acid polypeptide reads, in one-letter code: Asparagine--tRNA ligase (455 aa).

The protein belongs to the class-II aminoacyl-tRNA synthetase family. Homodimer.

It is found in the cytoplasm. It catalyses the reaction tRNA(Asn) + L-asparagine + ATP = L-asparaginyl-tRNA(Asn) + AMP + diphosphate + H(+). The polypeptide is Asparagine--tRNA ligase (Mycoplasma pneumoniae (strain ATCC 29342 / M129 / Subtype 1) (Mycoplasmoides pneumoniae)).